The following is a 244-amino-acid chain: Mediator of RNA polymerase II transcription subunit 8 (244 aa).

Residues 6 to 30 adopt a coiled-coil conformation; sequence QEQLKTLEQSRQRLVQLTRSLASLI.

Belongs to the Mediator complex subunit 8 family. In terms of assembly, component of the Mediator complex.

It localises to the nucleus. Its function is as follows. Component of the Mediator complex, a coactivator involved in the regulated transcription of nearly all RNA polymerase II-dependent genes. Mediator functions as a bridge to convey information from gene-specific regulatory proteins to the basal RNA polymerase II transcription machinery. Mediator is recruited to promoters by direct interactions with regulatory proteins and serves as a scaffold for the assembly of a functional preinitiation complex with RNA polymerase II and the general transcription factors. In Aspergillus oryzae (strain ATCC 42149 / RIB 40) (Yellow koji mold), this protein is Mediator of RNA polymerase II transcription subunit 8 (med8).